Reading from the N-terminus, the 308-residue chain is Protoheme IX farnesyltransferase (308 aa).

Helical transmembrane passes span 31 to 51 (VGIVYSNLITTFTGMWLAFYF), 60 to 80 (LDIVLFTLAGSSLIIAGSCVI), 110 to 130 (ALWFGILLTALGFIMLLMTNL), 131 to 151 (TAAGVGFVGVFTYVFLYTMWS), 157 to 177 (VNTIIGSVSGAVPPLIGWTAV), 185 to 205 (AWVLFLIMFIWQIPHFLALAI), 232 to 252 (IIIWIACLMPLPFFLGGLGLP), 253 to 273 (IVILGTVLNIGWLVCGLVGYR), and 285 to 305 (FVYSLNYLTIFFVAMVVFTLF).

Belongs to the UbiA prenyltransferase family. Protoheme IX farnesyltransferase subfamily. In terms of assembly, interacts with CtaA.

The protein localises to the cell membrane. The enzyme catalyses heme b + (2E,6E)-farnesyl diphosphate + H2O = Fe(II)-heme o + diphosphate. The protein operates within porphyrin-containing compound metabolism; heme O biosynthesis; heme O from protoheme: step 1/1. Functionally, converts heme B (protoheme IX) to heme O by substitution of the vinyl group on carbon 2 of heme B porphyrin ring with a hydroxyethyl farnesyl side group. The chain is Protoheme IX farnesyltransferase from Bacillus licheniformis (strain ATCC 14580 / DSM 13 / JCM 2505 / CCUG 7422 / NBRC 12200 / NCIMB 9375 / NCTC 10341 / NRRL NRS-1264 / Gibson 46).